We begin with the raw amino-acid sequence, 322 residues long: Ferredoxin--NADP reductase (322 aa).

FAD contacts are provided by Leu-87, Phe-119, Asp-279, and Thr-320.

This sequence belongs to the ferredoxin--NADP reductase type 2 family. As to quaternary structure, homodimer. It depends on FAD as a cofactor.

The catalysed reaction is 2 reduced [2Fe-2S]-[ferredoxin] + NADP(+) + H(+) = 2 oxidized [2Fe-2S]-[ferredoxin] + NADPH. The polypeptide is Ferredoxin--NADP reductase (Streptococcus suis (strain 98HAH33)).